We begin with the raw amino-acid sequence, 300 residues long: MKVIKTLSIINFFIFVTFNIKNESKYSNTFINNAYNMSIRRSMEESKPPTGAVAGSGAGAGSGAGAVAGSGAGAVAGSGAGAVAGSGAGAVAGSGAGAVAGSGAVAGSGAGNGANPGADAERGPSTPATTTTTTTTNDAEASTSTSSENRNHNNAETNPKGKGEVQKPNQANKETQNNSNVQQDSQTKSNVPRTQDADTKSPTAQPEQAENSAPTAEQTESPELQSAPENKGTGQHGHMHGSRNNHPQNTSDSQKECTDGNKENCGAATSLLNNSSNIASINKFVVLISATLVLSFAIFI.

The signal sequence occupies residues 1–20; sequence MKVIKTLSIINFFIFVTFNI. N-linked (GlcNAc...) asparagine glycans are attached at residues N22 and N36. A polymorphic region region spans residues 44-226; that stretch reads EESKPPTGAV…EQTESPELQS (183 aa). Residues 51–58 form a 1; inverted repeat; that stretch reads GAVAGSGA. The 7 X 8 AA tandem repeats of G-S-G-A-G-A-V-A stretch occupies residues 51-74; sequence GAVAGSGAGAGSGAGAVAGSGAGA. 5 tandem repeats follow at residues 61–68, 69–76, 77–84, 85–92, and 93–100. The stretch at 103–110 is one 7; inverted repeat; it reads GAVAGSGA. Residues 111–261 form a disordered region; the sequence is GNGANPGADA…DSQKECTDGN (151 aa). Over residues 124–148 the composition is skewed to low complexity; sequence PSTPATTTTTTTTNDAEASTSTSSE. A compositionally biased stretch (basic and acidic residues) spans 149 to 165; sequence NRNHNNAETNPKGKGEV. Polar residues-rich tracts occupy residues 167–193 and 200–228; these read KPNQANKETQNNSNVQQDSQTKSNVPR and KSPTAQPEQAENSAPTAEQTESPELQSAP. An N-linked (GlcNAc...) asparagine glycan is attached at N177. N249 carries N-linked (GlcNAc...) asparagine glycosylation. C257 and C265 are joined by a disulfide. N-linked (GlcNAc...) asparagine glycans are attached at residues N273 and N274. N274 carries GPI-anchor amidated asparagine lipidation. A propeptide spans 275-300 (removed in mature form); the sequence is SSNIASINKFVVLISATLVLSFAIFI.

The protein localises to the cell membrane. Functionally, may play a role in the merozoite attachment to the erythrocyte. The polypeptide is Merozoite surface protein 2 (Plasmodium falciparum (isolate mad71 / Papua New Guinea)).